Reading from the N-terminus, the 276-residue chain is Urease accessory protein UreD (276 aa).

The protein belongs to the UreD family. UreD, UreF and UreG form a complex that acts as a GTP-hydrolysis-dependent molecular chaperone, activating the urease apoprotein by helping to assemble the nickel containing metallocenter of UreC. The UreE protein probably delivers the nickel.

It localises to the cytoplasm. In terms of biological role, required for maturation of urease via the functional incorporation of the urease nickel metallocenter. In Polaromonas sp. (strain JS666 / ATCC BAA-500), this protein is Urease accessory protein UreD.